The sequence spans 36 residues: Dermonecrotic toxin LgSicTox-beta-LOXN1/LOXN7 (36 aa).

The protein belongs to the arthropod phospholipase D family. Class II subfamily. Mg(2+) serves as cofactor. In terms of processing, contains 2 disulfide bonds. In terms of tissue distribution, expressed by the venom gland.

It localises to the secreted. The catalysed reaction is an N-(acyl)-sphingosylphosphocholine = an N-(acyl)-sphingosyl-1,3-cyclic phosphate + choline. It carries out the reaction an N-(acyl)-sphingosylphosphoethanolamine = an N-(acyl)-sphingosyl-1,3-cyclic phosphate + ethanolamine. The enzyme catalyses a 1-acyl-sn-glycero-3-phosphocholine = a 1-acyl-sn-glycero-2,3-cyclic phosphate + choline. It catalyses the reaction a 1-acyl-sn-glycero-3-phosphoethanolamine = a 1-acyl-sn-glycero-2,3-cyclic phosphate + ethanolamine. Functionally, dermonecrotic toxins cleave the phosphodiester linkage between the phosphate and headgroup of certain phospholipids (sphingolipid and lysolipid substrates), forming an alcohol (often choline) and a cyclic phosphate. This toxin acts on sphingomyelin (SM). It may also act on ceramide phosphoethanolamine (CPE), lysophosphatidylcholine (LPC) and lysophosphatidylethanolamine (LPE), but not on lysophosphatidylserine (LPS), and lysophosphatidylglycerol (LPG). It acts by transphosphatidylation, releasing exclusively cyclic phosphate products as second products. Induces dermonecrosis, hemolysis, increased vascular permeability, edema, inflammatory response, and platelet aggregation. The polypeptide is Dermonecrotic toxin LgSicTox-beta-LOXN1/LOXN7 (Loxosceles gaucho (Spider)).